The primary structure comprises 134 residues: Profilin-4 (134 aa).

A disulfide bridge connects residues Cys-13 and Cys-118. The Involved in PIP2 interaction motif lies at 84-100 (AVIRGKKGSGGITIKKT). A Phosphothreonine modification is found at Thr-114.

This sequence belongs to the profilin family. Occurs in many kinds of cells as a complex with monomeric actin in a 1:1 ratio. In terms of processing, phosphorylated by MAP kinases.

It is found in the cytoplasm. It localises to the cytoskeleton. Its function is as follows. Binds to actin and affects the structure of the cytoskeleton. At high concentrations, profilin prevents the polymerization of actin, whereas it enhances it at low concentrations. The sequence is that of Profilin-4 from Olea europaea (Common olive).